Consider the following 327-residue polypeptide: Ferrochelatase 2 (327 aa).

Fe cation-binding residues include histidine 201 and glutamate 282.

The protein belongs to the ferrochelatase family.

The protein localises to the cytoplasm. It catalyses the reaction heme b + 2 H(+) = protoporphyrin IX + Fe(2+). It functions in the pathway porphyrin-containing compound metabolism; protoheme biosynthesis; protoheme from protoporphyrin-IX: step 1/1. In terms of biological role, catalyzes the ferrous insertion into protoporphyrin IX. This chain is Ferrochelatase 2, found in Shewanella oneidensis (strain ATCC 700550 / JCM 31522 / CIP 106686 / LMG 19005 / NCIMB 14063 / MR-1).